A 158-amino-acid chain; its full sequence is UPF0758 protein YkfG (158 aa).

Residues 36 to 158 (AFTSTHAVRE…IYSFAEHGLL (123 aa)) enclose the MPN domain. H107, H109, and D120 together coordinate Zn(2+). Residues 107–120 (HNHPSGETTPSQAD) carry the JAMM motif motif.

This sequence belongs to the UPF0758 family.

The sequence is that of UPF0758 protein YkfG (ykfG) from Escherichia coli (strain K12).